The primary structure comprises 545 residues: Endo-beta-N-acetylglucosaminidase (545 aa).

The N-terminal stretch at 1–36 (MTFIKQMMPRYVASMTAGIVAAAMAATCAFAPVANA) is a signal peptide. In terms of domain architecture, GH18 spans 51–333 (RHFMVYYRAW…EDLRRIVPSN (283 aa)). The Proton donor role is filled by Glu-184. A disordered region spans residues 486–511 (PVPTPDSTDQNGNRDKVTNHKVQGQP). The chain crosses the membrane as a helical span at residues 518–538 (GISTDIIVAVGVTLAIAGVAL).

The protein belongs to the glycosyl hydrolase 18 family.

It localises to the cell membrane. The enzyme catalyses an N(4)-(oligosaccharide-(1-&gt;3)-[oligosaccharide-(1-&gt;6)]-beta-D-Man-(1-&gt;4)-beta-D-GlcNAc-(1-&gt;4)-alpha-D-GlcNAc)-L-asparaginyl-[protein] + H2O = an oligosaccharide-(1-&gt;3)-[oligosaccharide-(1-&gt;6)]-beta-D-Man-(1-&gt;4)-D-GlcNAc + N(4)-(N-acetyl-beta-D-glucosaminyl)-L-asparaginyl-[protein]. In terms of biological role, endoglycosidase with broad specificity that cleaves the chitobiose core of high mannose and complex N-linked glycans. Is able to release N-glycans from diverse host glycoproteins such as human and bovine lactoferrin, immunoglobulins A and G, and ribonuclease B. Is active directly on human breast milk - a complex matrix of lipids, oligosaccharides, and proteins with disparate glycosylation types - successfully removing a significant proportion of the total amount of N-glycans. Does not recognize O-linked glycans or free human milk oligosaccharides (HMO). This Bifidobacterium longum subsp. infantis (strain ATCC 15697 / DSM 20088 / JCM 1222 / NCTC 11817 / S12) protein is Endo-beta-N-acetylglucosaminidase.